The following is a 222-amino-acid chain: UPF0502 protein Shewmr4_1554 (222 aa).

The segment covering 175-193 (SLSADSPSAGSNSLNAQDR) has biased composition (polar residues). Residues 175-194 (SLSADSPSAGSNSLNAQDRQ) form a disordered region.

The protein belongs to the UPF0502 family.

The polypeptide is UPF0502 protein Shewmr4_1554 (Shewanella sp. (strain MR-4)).